A 456-amino-acid chain; its full sequence is GTPase Der (456 aa).

EngA-type G domains are found at residues 3–167 (FTIA…PETE) and 185–360 (IRVA…AVWN). GTP contacts are provided by residues 9–16 (GRPNVGKS), 56–60 (DTAGL), 119–122 (NKSE), 191–198 (GRPNAGKS), 238–242 (DTAGL), and 303–306 (NKWD). Residues 361-445 (RRVPTAALNR…PVRITLREKA (85 aa)) form the KH-like domain.

Belongs to the TRAFAC class TrmE-Era-EngA-EngB-Septin-like GTPase superfamily. EngA (Der) GTPase family. In terms of assembly, associates with the 50S ribosomal subunit.

In terms of biological role, GTPase that plays an essential role in the late steps of ribosome biogenesis. This chain is GTPase Der, found in Bradyrhizobium sp. (strain BTAi1 / ATCC BAA-1182).